Consider the following 396-residue polypeptide: Sialyltransferase-like protein 2 (396 aa).

The Cytoplasmic portion of the chain corresponds to 1 to 6 (MKRRHL). A helical; Signal-anchor for type II membrane protein membrane pass occupies residues 7-23 (PPVLVLLLLSILSLSFR). The Lumenal segment spans residues 24–396 (RRLLVLQGPP…FTVPPVRLHR (373 aa)). Asn72, Asn260, and Asn304 each carry an N-linked (GlcNAc...) asparagine glycan.

The protein belongs to the glycosyltransferase 29 family.

It localises to the golgi apparatus membrane. In terms of biological role, does not possess sialyltransferase-like activity in vitro. The protein is Sialyltransferase-like protein 2 of Oryza sativa subsp. indica (Rice).